A 64-amino-acid chain; its full sequence is Putative neurotoxin 5 (64 aa).

Residues 1–18 (MKNKFAALVITLFVLVLA) form the signal peptide.

Belongs to the scolopendra neurotoxin 6 family. Contains 3 disulfide bonds. Expressed by the venom gland.

Its subcellular location is the secreted. The chain is Putative neurotoxin 5 from Scolopendra mutilans (Chinese red-headed centipede).